Here is a 105-residue protein sequence, read N- to C-terminus: MIIRRNNKALGSVMSDFIKTINEEYDSNIKEIKSEIDIKCNSILKELDEKYRQEIKELCMIVDQLKNQYKIIDNIYSRYITEIRIQLLALKEENKCLKEELTKLK.

This is an uncharacterized protein from Fowlpox virus (strain NVSL) (FPV).